Here is a 330-residue protein sequence, read N- to C-terminus: Deoxyhypusine hydroxylase (330 aa).

3 HEAT-like PBS-type repeats span residues 57–83 (LKHE…VLRN), 90–116 (VRHE…YLSD), and 199–225 (ERYR…GFSG). Residues His59, Glu60, His92, and Glu93 each contribute to the Fe cation site. The Fe cation site is built by His232, Glu233, His265, and Glu266. One copy of the HEAT-like PBS-type 4 repeat lies at 263-289 (VRHEAAEALGGIATPEVLPPLKEWVAR).

The protein belongs to the deoxyhypusine hydroxylase family. Fe(2+) is required as a cofactor.

The protein resides in the cytoplasm. It localises to the nucleus. It catalyses the reaction [eIF5A protein]-deoxyhypusine + AH2 + O2 = [eIF5A protein]-hypusine + A + H2O. It participates in protein modification; eIF5A hypusination. In terms of biological role, catalyzes the hydroxylation of the N(6)-(4-aminobutyl)-L-lysine intermediate to form hypusine, an essential post-translational modification only found in mature eIF-5A factor. In Lentinula edodes (Shiitake mushroom), this protein is Deoxyhypusine hydroxylase.